Consider the following 979-residue polypeptide: Glycine dehydrogenase (decarboxylating) (979 aa).

Lysine 724 bears the N6-(pyridoxal phosphate)lysine mark.

It belongs to the GcvP family. The glycine cleavage system is composed of four proteins: P, T, L and H. Pyridoxal 5'-phosphate is required as a cofactor.

The enzyme catalyses N(6)-[(R)-lipoyl]-L-lysyl-[glycine-cleavage complex H protein] + glycine + H(+) = N(6)-[(R)-S(8)-aminomethyldihydrolipoyl]-L-lysyl-[glycine-cleavage complex H protein] + CO2. Functionally, the glycine cleavage system catalyzes the degradation of glycine. The P protein binds the alpha-amino group of glycine through its pyridoxal phosphate cofactor; CO(2) is released and the remaining methylamine moiety is then transferred to the lipoamide cofactor of the H protein. The polypeptide is Glycine dehydrogenase (decarboxylating) (Nostoc punctiforme (strain ATCC 29133 / PCC 73102)).